The sequence spans 291 residues: Ribose-phosphate pyrophosphokinase (291 aa).

ATP contacts are provided by residues 34 to 36 (DGE) and 93 to 94 (RQ). 2 residues coordinate Mg(2+): His127 and Asp165. Residue Lys188 is part of the active site. D-ribose 5-phosphate contacts are provided by residues Arg190, Asp216, and 220–224 (STGGT).

The protein belongs to the ribose-phosphate pyrophosphokinase family. Class III (archaeal) subfamily. Homodimer. It depends on Mg(2+) as a cofactor.

It localises to the cytoplasm. It carries out the reaction D-ribose 5-phosphate + ATP = 5-phospho-alpha-D-ribose 1-diphosphate + AMP + H(+). Its pathway is metabolic intermediate biosynthesis; 5-phospho-alpha-D-ribose 1-diphosphate biosynthesis; 5-phospho-alpha-D-ribose 1-diphosphate from D-ribose 5-phosphate (route I): step 1/1. Involved in the biosynthesis of the central metabolite phospho-alpha-D-ribosyl-1-pyrophosphate (PRPP) via the transfer of pyrophosphoryl group from ATP to 1-hydroxyl of ribose-5-phosphate (Rib-5-P). In Saccharolobus solfataricus (strain ATCC 35092 / DSM 1617 / JCM 11322 / P2) (Sulfolobus solfataricus), this protein is Ribose-phosphate pyrophosphokinase.